The chain runs to 324 residues: RING-H2 finger protein ATL3 (324 aa).

The chain crosses the membrane as a helical span at residues 24–44 (IILTAIIVLFMAVLFVLILHL). An RING-type; atypical zinc finger spans residues 127–169 (CSICLSELVKGDKARLLPKCNHSFHVECIDMWFQSHSTCPICR). Disordered regions lie at residues 179–210 (SSKRVEQVPDNAENAGTTNNNHDALSQLSTSS), 226–248 (VSTGNTNVGTQEDGAAGNGASQS), and 299–324 (RDKRVGCSNSSTSNSSSSNAVASVDP). Polar residues-rich tracts occupy residues 192-210 (NAGTTNNNHDALSQLSTSS) and 226-235 (VSTGNTNVGT). Low complexity predominate over residues 306–324 (SNSSTSNSSSSNAVASVDP).

It belongs to the RING-type zinc finger family. ATL subfamily.

It is found in the membrane. The catalysed reaction is S-ubiquitinyl-[E2 ubiquitin-conjugating enzyme]-L-cysteine + [acceptor protein]-L-lysine = [E2 ubiquitin-conjugating enzyme]-L-cysteine + N(6)-ubiquitinyl-[acceptor protein]-L-lysine.. It participates in protein modification; protein ubiquitination. The protein is RING-H2 finger protein ATL3 (ATL3) of Arabidopsis thaliana (Mouse-ear cress).